The sequence spans 57 residues: uncharacterized protein (57 aa).

This is an uncharacterized protein from Escherichia coli.